A 684-amino-acid polypeptide reads, in one-letter code: Cleavage and polyadenylation specificity factor 73 (684 aa).

The Zn(2+) site is built by H77, H79, D81, H82, H164, and D185. Residue H402 is the Proton donor of the active site. H424 is a binding site for Zn(2+).

This sequence belongs to the metallo-beta-lactamase superfamily. RNA-metabolizing metallo-beta-lactamase-like family. CPSF3 subfamily. Component of the cleavage and polyadenylation specificity factor (CPSF) complex, composed of at least Clp, Cpsf73, Cpsf100 and Cpsf160. Interacts with Sym and Cpsf100 forming a core cleavage factor required for both polyadenylated and histone mRNA processing. Interacts with Slbp and Lsm11. Zn(2+) is required as a cofactor.

The protein localises to the nucleus. In terms of biological role, component of the cleavage and polyadenylation specificity factor (CPSF) complex that plays a key role in pre-mRNA 3'-end formation, recognizing the AAUAAA signal sequence and interacting with poly(A) polymerase and other factors to bring about cleavage and poly(A) addition. Has endonuclease activity and functions as an mRNA 3'-end-processing endonuclease. Required for the cotranscriptional processing of 3'-ends of polyadenylated and histone pre-mRNA. This chain is Cleavage and polyadenylation specificity factor 73 (Cpsf73), found in Drosophila melanogaster (Fruit fly).